Reading from the N-terminus, the 702-residue chain is Polyribonucleotide nucleotidyltransferase (702 aa).

D485 and D491 together coordinate Mg(2+). The KH domain occupies 552–612 (PRTEIICIDP…EGVKKAISII (61 aa)). Positions 622 to 690 (GEIYLGKVTK…NQGRINLSRK (69 aa)) constitute an S1 motif domain.

Belongs to the polyribonucleotide nucleotidyltransferase family. Mg(2+) serves as cofactor.

The protein localises to the cytoplasm. The catalysed reaction is RNA(n+1) + phosphate = RNA(n) + a ribonucleoside 5'-diphosphate. In terms of biological role, involved in mRNA degradation. Catalyzes the phosphorolysis of single-stranded polyribonucleotides processively in the 3'- to 5'-direction. The chain is Polyribonucleotide nucleotidyltransferase from Clostridium botulinum (strain Langeland / NCTC 10281 / Type F).